Reading from the N-terminus, the 220-residue chain is Metalloproteinase inhibitor 2 (220 aa).

An N-terminal signal peptide occupies residues Met1–Ala26. Cys27 is a binding site for Zn(2+). Involved in metalloproteinase-binding stretches follow at residues Cys27–Ser30 and Thr95–Glu96. 6 disulfides stabilise this stretch: Cys27–Cys98, Cys29–Cys127, Cys39–Cys152, Cys154–Cys201, Cys159–Cys164, and Cys172–Cys193. The NTR domain maps to Cys27 to Cys152.

This sequence belongs to the protease inhibitor I35 (TIMP) family. In terms of processing, the activity of TIMP2 is dependent on the presence of disulfide bonds.

Its subcellular location is the secreted. In terms of biological role, complexes with metalloproteinases (such as collagenases) and irreversibly inactivates them by binding to their catalytic zinc cofactor. This chain is Metalloproteinase inhibitor 2 (TIMP2), found in Gallus gallus (Chicken).